Reading from the N-terminus, the 137-residue chain is Glutamyl-tRNA(Gln) amidotransferase subunit C, chloroplastic/mitochondrial (137 aa).

The protein belongs to the GatC family. Subunit of the heterotrimeric GatCAB amidotransferase (AdT) complex, composed of A, B and C subunits.

It localises to the mitochondrion. The protein resides in the plastid. It is found in the chloroplast. It catalyses the reaction L-glutamyl-tRNA(Gln) + L-glutamine + ATP + H2O = L-glutaminyl-tRNA(Gln) + L-glutamate + ADP + phosphate + H(+). Its function is as follows. Allows the formation of correctly charged Gln-tRNA(Gln) through the transamidation of misacylated Glu-tRNA(Gln) in chloroplasts and mitochondria. The reaction takes place in the presence of glutamine and ATP through an activated gamma-phospho-Glu-tRNA(Gln). In Vitis vinifera (Grape), this protein is Glutamyl-tRNA(Gln) amidotransferase subunit C, chloroplastic/mitochondrial.